The sequence spans 558 residues: Formate--tetrahydrofolate ligase (558 aa).

66–73 is a binding site for ATP; that stretch reads TPAGEGKT.

Belongs to the formate--tetrahydrofolate ligase family.

It carries out the reaction (6S)-5,6,7,8-tetrahydrofolate + formate + ATP = (6R)-10-formyltetrahydrofolate + ADP + phosphate. The protein operates within one-carbon metabolism; tetrahydrofolate interconversion. In Neisseria meningitidis serogroup C (strain 053442), this protein is Formate--tetrahydrofolate ligase.